The following is a 504-amino-acid chain: Probable chlorophyll(ide) b reductase NYC1, chloroplastic (504 aa).

Residues 1–33 (MAAAAVVHLSVHGRLRRSPELHARPYHRPSLLR) constitute a chloroplast transit peptide. A disordered region spans residues 41-63 (ADNGGEEASSSPPPPTTAEARRR). The next 2 membrane-spanning stretches (helical) occupy residues 114–134 (YVITMMSSGVVLGVGFQLSGG) and 141–161 (LIWYSWLGGVIIGTMIGANSV). An NAD(+)-binding site is contributed by 175–199 (ITGSTRGLGKALAREFLLSGDRVVI). Residue Tyr-339 is the Proton acceptor of the active site. A helical membrane pass occupies residues 479–499 (WVSVFSLSVVCAFIILSSSGG).

The protein belongs to the short-chain dehydrogenases/reductases (SDR) family. Interacts with NOL to form a complex that acts as a chlorophyll b reductase. In terms of tissue distribution, expressed in leaves and stems. Also detected in non-photosynthetic tissues such as roots.

The protein localises to the plastid. It is found in the chloroplast thylakoid membrane. It catalyses the reaction 7(1)-hydroxychlorophyllide a + NAD(+) = chlorophyllide b + NADH + H(+). The enzyme catalyses 7(1)-hydroxychlorophyllide a + NADP(+) = chlorophyllide b + NADPH + H(+). Required for proper chloroplast degradation. Involved in chlorophyll b degradation. This Oryza sativa subsp. japonica (Rice) protein is Probable chlorophyll(ide) b reductase NYC1, chloroplastic (NYC1).